A 379-amino-acid polypeptide reads, in one-letter code: Chaperone protein DnaJ (379 aa).

Residues 7 to 72 (CYYETLEVER…DKRAAYDRYG (66 aa)) enclose the J domain. The segment at 135–213 (GKTAQIEIPV…CTGSGRVTKE (79 aa)) adopts a CR-type zinc-finger fold. Zn(2+) contacts are provided by C148, C151, C165, C168, C187, C190, C201, and C204. CXXCXGXG motif repeat units lie at residues 148–155 (CESCSGTG), 165–172 (CSTCGGAG), 187–194 (CPSCQGRG), and 201–208 (CPSCTGSG).

Belongs to the DnaJ family. Homodimer. Zn(2+) is required as a cofactor.

Its subcellular location is the cytoplasm. Participates actively in the response to hyperosmotic and heat shock by preventing the aggregation of stress-denatured proteins and by disaggregating proteins, also in an autonomous, DnaK-independent fashion. Unfolded proteins bind initially to DnaJ; upon interaction with the DnaJ-bound protein, DnaK hydrolyzes its bound ATP, resulting in the formation of a stable complex. GrpE releases ADP from DnaK; ATP binding to DnaK triggers the release of the substrate protein, thus completing the reaction cycle. Several rounds of ATP-dependent interactions between DnaJ, DnaK and GrpE are required for fully efficient folding. Also involved, together with DnaK and GrpE, in the DNA replication of plasmids through activation of initiation proteins. This chain is Chaperone protein DnaJ, found in Rhodopseudomonas palustris (strain HaA2).